A 576-amino-acid polypeptide reads, in one-letter code: Septation ring formation regulator EzrA (576 aa).

Residues 1-7 lie on the Extracellular side of the membrane; that stretch reads MSSTVII. Residues 8-26 traverse the membrane as a helical segment; sequence LIVVLLVILVAFYAFAILM. Residues 27 to 576 are Cytoplasmic-facing; it reads RKKTEDRILA…FKNKPTPDYL (550 aa). Coiled coils occupy residues 105 to 134 and 277 to 301; these read RARE…VAQL and EQFE…LYAI.

This sequence belongs to the EzrA family.

The protein localises to the cell membrane. Negative regulator of FtsZ ring formation; modulates the frequency and position of FtsZ ring formation. Inhibits FtsZ ring formation at polar sites. Interacts either with FtsZ or with one of its binding partners to promote depolymerization. This Lactococcus lactis subsp. lactis (strain IL1403) (Streptococcus lactis) protein is Septation ring formation regulator EzrA.